A 346-amino-acid polypeptide reads, in one-letter code: Putative D-threonate 4-phosphate dehydrogenase (346 aa).

Substrate-binding residues include H141 and T142. A divalent metal cation is bound by residues H171, H215, and H270. Positions 278 and 296 each coordinate substrate.

This sequence belongs to the PdxA family. PdxA2 subfamily. In terms of assembly, homodimer. The cofactor is a divalent metal cation.

The catalysed reaction is 4-O-phospho-D-threonate + NAD(+) = dihydroxyacetone phosphate + CO2 + NADH. Functionally, catalyzes the NAD-dependent oxidation and subsequent decarboxylation of D-threonate 4-phosphate to produce dihydroxyacetone phosphate (DHAP). The protein is Putative D-threonate 4-phosphate dehydrogenase of Cutibacterium acnes (strain DSM 16379 / KPA171202) (Propionibacterium acnes).